Here is a 380-residue protein sequence, read N- to C-terminus: Alcohol dehydrogenase 3 (380 aa).

Zn(2+) is bound by residues Cys48, Thr50, His70, Cys100, Cys103, Cys106, Cys114, and Cys178. An alcohol-binding residues include Thr50 and His70. Thr50 serves as a coordination point for NAD(+). NAD(+)-binding positions include 203–208 (GLGAVG), Asp227, Arg232, Thr273, Val296, 296–298 (VGV), Phe323, and Arg373.

This sequence belongs to the zinc-containing alcohol dehydrogenase family. Homodimer. Homotetramer. Zn(2+) is required as a cofactor.

Its subcellular location is the cytoplasm. It catalyses the reaction a primary alcohol + NAD(+) = an aldehyde + NADH + H(+). It carries out the reaction a secondary alcohol + NAD(+) = a ketone + NADH + H(+). This is Alcohol dehydrogenase 3 (ADH3) from Solanum tuberosum (Potato).